The chain runs to 558 residues: Urocanate hydratase (558 aa).

NAD(+) contacts are provided by residues 53–54 (GG), glutamine 131, 177–179 (GMG), glutamate 197, arginine 202, 243–244 (NA), 264–268 (QTSAH), 274–275 (YL), and tyrosine 323. The active site involves cysteine 411. Glycine 493 serves as a coordination point for NAD(+).

The protein belongs to the urocanase family. Requires NAD(+) as cofactor.

The protein localises to the cytoplasm. It catalyses the reaction 4-imidazolone-5-propanoate = trans-urocanate + H2O. The protein operates within amino-acid degradation; L-histidine degradation into L-glutamate; N-formimidoyl-L-glutamate from L-histidine: step 2/3. In terms of biological role, catalyzes the conversion of urocanate to 4-imidazolone-5-propionate. The chain is Urocanate hydratase from Idiomarina loihiensis (strain ATCC BAA-735 / DSM 15497 / L2-TR).